Here is a 551-residue protein sequence, read N- to C-terminus: Tripartite motif-containing protein 5 (551 aa).

At Ala2 the chain carries N-acetylalanine. An RING-type zinc finger spans residues 15–55 (CPICLELLTEPLSLDCGHSFCQACITANHKESRERSCPLCR). Phosphoserine is present on Ser82. The segment at 87–128 (QKVDRCARHGEKLLLFCQQHGNVICWLCERSEEHRGHRTSLV) adopts a B box-type zinc-finger fold. Zn(2+) is bound by residues Cys92, His95, Cys114, and His120. A coiled-coil region spans residues 127–221 (LVEEVAQKYR…VQSENDMVLQ (95 aa)). Residues 182-195 (FKQLRDILDCEESN) form a required for interaction with GABARAP and for autophagy region. One can recognise a B30.2/SPRY domain in the interval 276 to 551 (PDLKGMLQVF…LPMTLCSPSS (276 aa)).

It belongs to the TRIM/RBCC family. In terms of assembly, can form homodimers and homotrimers. In addition to lower-order dimerization, also exhibits a higher-order multimerization and both low- and high-order multimerizations are essential for its restriction activity. Interacts with BTBD1 and BTBD2. Interacts with PSMC4, PSMC5, PSMD7 and HSPA8/HSC70. Interacts (via B30.2/SPRY domain) with HSPA1A/B. Interacts with PSMC2, MAP3K7/TAK1, TAB2 and TAB3. Interacts with SQSTM1. Interacts with TRIM6 and TRIM34. Interacts with ULK1 (phosphorylated form), GABARAP, GABARAPL1, GABARAPL2, MAP1LC3A, MAP1LC3C and BECN1. Degraded in a proteasome-independent fashion in the absence of viral infection but in a proteasome-dependent fashion following exposure to restriction sensitive virus. Post-translationally, autoubiquitinated in a RING finger- and UBE2D2-dependent manner. Monoubiquitinated by TRIM21. Deubiquitinated by Yersinia YopJ. Ubiquitination may not lead to proteasomal degradation.

The protein resides in the cytoplasm. Its subcellular location is the nucleus. It catalyses the reaction S-ubiquitinyl-[E2 ubiquitin-conjugating enzyme]-L-cysteine + [acceptor protein]-L-lysine = [E2 ubiquitin-conjugating enzyme]-L-cysteine + N(6)-ubiquitinyl-[acceptor protein]-L-lysine.. The protein operates within protein modification; protein ubiquitination. Its function is as follows. Capsid-specific restriction factor that prevents infection from non-host-adapted retroviruses. Blocks viral replication early in the life cycle, after viral entry but before reverse transcription. In addition to acting as a capsid-specific restriction factor, also acts as a pattern recognition receptor that activates innate immune signaling in response to the retroviral capsid lattice. Binding to the viral capsid triggers its E3 ubiquitin ligase activity, and in concert with the heterodimeric ubiquitin conjugating enzyme complex UBE2V1-UBE2N (also known as UBC13-UEV1A complex) generates 'Lys-63'-linked polyubiquitin chains, which in turn are catalysts in the autophosphorylation of the MAP3K7/TAK1 complex (includes TAK1, TAB2, and TAB3). Activation of the MAP3K7/TAK1 complex by autophosphorylation results in the induction and expression of NF-kappa-B and MAPK-responsive inflammatory genes, thereby leading to an innate immune response in the infected cell. Plays a role in regulating autophagy through activation of autophagy regulator BECN1 by causing its dissociation from its inhibitors BCL2 and TAB2. The protein is Tripartite motif-containing protein 5 (TRIM5) of Alouatta sara (Bolivian red howler monkey).